The sequence spans 63 residues: Probable rubredoxin (63 aa).

The Rubredoxin-like domain maps to 11–62 (MKRYKCRVCGYIYDPEKGEPRTDTPPGTPFEDLPETWRCPSCGAKKKMFKPL). Residues Cys-16, Cys-19, Cys-49, and Cys-52 each coordinate Fe cation.

The protein belongs to the rubredoxin family. Fe(3+) serves as cofactor.

Its function is as follows. Rubredoxin is a small nonheme, iron protein lacking acid-labile sulfide. Its single Fe, chelated to 4 Cys, functions as an electron acceptor and may also stabilize the conformation of the molecule. This chain is Probable rubredoxin, found in Methanothermobacter thermautotrophicus (strain ATCC 29096 / DSM 1053 / JCM 10044 / NBRC 100330 / Delta H) (Methanobacterium thermoautotrophicum).